Consider the following 514-residue polypeptide: Putative ankyrin repeat protein R863 (514 aa).

ANK repeat units lie at residues Ala-45–Pro-74, Lys-84–Ser-114, Lys-115–Ala-144, Lys-146–Val-174, Asp-176–Ala-204, Asp-205–Ala-234, Asn-236–Ser-264, Asn-266–Ser-294, Glu-295–Ala-324, Asp-325–Ser-354, Asn-356–Ser-384, Asp-385–Val-414, Asn-415–Ala-444, Asn-446–Ala-474, and Asn-476–Ser-504.

In Acanthamoeba polyphaga mimivirus (APMV), this protein is Putative ankyrin repeat protein R863.